The following is a 382-amino-acid chain: MIOREX complex component 5 (382 aa).

The N-terminal 12 residues, 1–12 (MRRTFSQLATRL), are a transit peptide targeting the mitochondrion.

In terms of assembly, associates with the mitochondrial ribosome.

The protein resides in the mitochondrion. Functionally, component of MIOREX complexes, large expressome-like assemblies of ribosomes with factors involved in all the steps of post-transcriptional gene expression. This Saccharomyces cerevisiae (strain ATCC 204508 / S288c) (Baker's yeast) protein is MIOREX complex component 5.